The following is a 247-amino-acid chain: Mycofactocin precursor peptide peptidase (247 aa).

5 residues coordinate a divalent metal cation: Glu-38, His-40, Asp-49, His-124, and Glu-163.

The protein belongs to the creatininase superfamily. In terms of assembly, homooctamer. Requires Fe(2+) as cofactor. Zn(2+) serves as cofactor.

The enzyme catalyses [mycofactocin precursor peptide]-C-terminal glycyl-N-{5-[(4-hydroxyphenyl)methyl]-4,4-dimethyl-2-oxopyrrolidin-3-yl}acetamide + H2O = [mycofactocin precursor peptide]-C-terminal glycine + 3-amino-5-[(4-hydroxyphenyl)methyl]-4,4-dimethyl-2-pyrrolidin-2-one. Functionally, peptidase involved in the biosynthesis of the enzyme cofactor mycofactocin (MFT). Catalyzes cleavage of the MftC-modified MftA peptide to liberate its final two residues, which consist of a cross-linked valine-decarboxylated tyrosine dipeptide (named 3-amino-5-[(4-hydroxyphenyl)methyl]-4,4-dimethyl-2-pyrrolidin-2-one or ADHP). Is required for the in vivo ethanol assimilation in M.smegmatis. This chain is Mycofactocin precursor peptide peptidase, found in Mycolicibacterium smegmatis (strain ATCC 700084 / mc(2)155) (Mycobacterium smegmatis).